Reading from the N-terminus, the 1648-residue chain is Homeostatic regulator of DAG (1648 aa).

One can recognise a DMAP1-binding domain in the interval 5–101 (IPPTLPLDLQ…YRVTTINSTS (97 aa)). N-linked (GlcNAc...) asparagine glycans are attached at residues asparagine 28, asparagine 71, and asparagine 98. 2 disordered regions span residues 52-73 (PYTP…RNTS) and 96-130 (TINS…ENGS). Residues 60 to 71 (NSRKSKHLHRRN) show a composition bias toward basic residues. Composition is skewed to polar residues over residues 96–105 (TINSTSANNT) and 113–128 (YTAS…SDEN). At serine 99 the chain carries Phosphoserine. Asparagine 128, asparagine 151, and asparagine 209 each carry an N-linked (GlcNAc...) asparagine glycan. The interval 158–893 (AMTDSLPLIL…VEKKFLNNDL (736 aa)) is fatty acyl-AMP ligase-like domain 1. The helical transmembrane segment at 228 to 248 (VIEFTIALLGCFISGMAAVPV) threads the bilayer. Asparagine 288, asparagine 328, asparagine 575, asparagine 644, and asparagine 730 each carry an N-linked (GlcNAc...) asparagine glycan. Serine 751 carries the post-translational modification Phosphoserine. N-linked (GlcNAc...) asparagine glycans are attached at residues asparagine 881, asparagine 917, asparagine 995, and asparagine 1009. Positions 950–1648 (VKPKLALQCS…LLSDYEKDNI (699 aa)) are fatty acyl-AMP ligase-like domain 2. A helical transmembrane segment spans residues 1061 to 1081 (YVAMIMACLYCNLLVIPLPSV). Residue asparagine 1198 is glycosylated (N-linked (GlcNAc...) asparagine). The helical transmembrane segment at 1224–1244 (GLGFMFSCLLGIYTGASTCLF) threads the bilayer. Residues asparagine 1301, asparagine 1302, asparagine 1447, asparagine 1472, asparagine 1488, asparagine 1565, asparagine 1597, and asparagine 1634 are each glycosylated (N-linked (GlcNAc...) asparagine).

It localises to the vacuole membrane. It is found in the mitochondrion membrane. Functionally, homeostatic regulator of a chemically distinct subset of diacylglycerols (DAGs) with C36 chain length that prevents the toxic accumulation of these specific DAGs in the logarithmic growth phase, which otherwise leads to endoplasmic reticulum stress. Maintains the basal level of DAG subspecies by directly facilitating DAG to triacylglycerol (TAG) conversion process, possibly via adenylation activity of its FLD domains. Does not affect the abundant DAG species (representing over 90% of total DAG pool), comprised of C32 and C34 chain lengths. Required for vacuole fusion-mediated osmoadaptation. The sequence is that of Homeostatic regulator of DAG from Saccharomyces cerevisiae (strain ATCC 204508 / S288c) (Baker's yeast).